A 299-amino-acid chain; its full sequence is Cysteine synthase B (299 aa).

Residue K40 is modified to N6-(pyridoxal phosphate)lysine. Pyridoxal 5'-phosphate contacts are provided by residues N70, 174–178 (GTGGT), and S261.

It belongs to the cysteine synthase/cystathionine beta-synthase family. Pyridoxal 5'-phosphate serves as cofactor.

It catalyses the reaction O-acetyl-L-serine + hydrogen sulfide = L-cysteine + acetate. It participates in amino-acid biosynthesis; L-cysteine biosynthesis; L-cysteine from L-serine: step 2/2. This is Cysteine synthase B (cysM) from Campylobacter jejuni subsp. jejuni serotype O:2 (strain ATCC 700819 / NCTC 11168).